The sequence spans 266 residues: Tryptophan synthase alpha chain (266 aa).

Catalysis depends on proton acceptor residues Glu-46 and Asp-57.

It belongs to the TrpA family. Tetramer of two alpha and two beta chains.

The enzyme catalyses (1S,2R)-1-C-(indol-3-yl)glycerol 3-phosphate + L-serine = D-glyceraldehyde 3-phosphate + L-tryptophan + H2O. It functions in the pathway amino-acid biosynthesis; L-tryptophan biosynthesis; L-tryptophan from chorismate: step 5/5. Its function is as follows. The alpha subunit is responsible for the aldol cleavage of indoleglycerol phosphate to indole and glyceraldehyde 3-phosphate. This Lacticaseibacillus casei (Lactobacillus casei) protein is Tryptophan synthase alpha chain.